The sequence spans 161 residues: Transcriptional repressor NrdR (161 aa).

A zinc finger spans residues 3–34; sequence CPSCQHTDSRVLESRAADSGKSVRRRRECLNC. An ATP-cone domain is found at 49 to 139; the sequence is ITVVKRSGTR…VYGKFSGISD (91 aa).

This sequence belongs to the NrdR family. Zn(2+) serves as cofactor.

Its function is as follows. Negatively regulates transcription of bacterial ribonucleotide reductase nrd genes and operons by binding to NrdR-boxes. In Synechococcus sp. (strain RCC307), this protein is Transcriptional repressor NrdR.